Here is a 2603-residue protein sequence, read N- to C-terminus: Protein SABRE (2603 aa).

The first 35 residues, 1–35 (MAASPAKFFFGFLIVSIVLWMIFMLFAWMLSRVLG), serve as a signal peptide directing secretion. N196 carries an N-linked (GlcNAc...) asparagine glycan. The disordered stretch occupies residues 259-287 (FPKSKQSSASLRSDEVRTSATAASSAKKP). N-linked (GlcNAc...) asparagine glycosylation is found at N331, N486, N597, N807, N867, N887, N1154, N1249, N1280, and N1408. The disordered stretch occupies residues 786-814 (PESGCNKGISSVKDGGPSEKINQSNSVNK). The segment at 1416-1436 (FHQSPSSTEHPTDVGTVYSSQ) is disordered. Residues N1492 and N1659 are each glycosylated (N-linked (GlcNAc...) asparagine). Disordered stretches follow at residues 1656-1676 (EFEN…DDDG) and 1717-1777 (EPPK…DDIG). A compositionally biased stretch (basic and acidic residues) spans 1731–1748 (KIHEENQKESCPETHQGE). Over residues 1749–1766 (MSRSSASPGRNLPSSPSH) the composition is skewed to polar residues. A coiled-coil region spans residues 1995–2023 (VEEVELAKINLEEKERERKLLLDDIRKLS). N2333 is a glycosylation site (N-linked (GlcNAc...) asparagine). Disordered stretches follow at residues 2339-2380 (EQQE…RPRK), 2448-2479 (GKKF…KPDQ), and 2554-2603 (IRRH…DFRE). Residues 2343-2380 (DFSKQKVKEIKPVKSGRSSHEEKKAGKSHEEKKSRPRK) are compositionally biased toward basic and acidic residues. Residue N2467 is glycosylated (N-linked (GlcNAc...) asparagine). Over residues 2554–2565 (IRRHTKKFRPRS) the composition is skewed to basic residues. Residues 2566 to 2583 (QRGSTSQQRESLPSSPIE) show a composition bias toward polar residues. Positions 2586-2603 (PFESGYSSGSSPYEDFRE) are enriched in low complexity.

Belongs to the SABRE family. As to expression, highest levels in leaves, also expressed in leaves, flowers, and siliques, and, to a lower extent, in roots and stems.

The protein resides in the secreted. The protein localises to the golgi apparatus. Its function is as follows. May be involved in membrane trafficking. Required for cell expansion, especially in root cortex, probably by counteracting the action of ethylene in promoting cells radial expansion. Involved in female organ development. Antagonistically interacts with ethylene signaling to regulate plant responses to Pi starvation. The chain is Protein SABRE from Arabidopsis thaliana (Mouse-ear cress).